The chain runs to 268 residues: Phosphate import ATP-binding protein PstB (268 aa).

Residues 22–263 form the ABC transporter domain; sequence LAVRNLNFYY…PKQQQTQDYI (242 aa). ATP is bound at residue 54–61; that stretch reads GPSGCGKS.

It belongs to the ABC transporter superfamily. Phosphate importer (TC 3.A.1.7) family. In terms of assembly, the complex is composed of two ATP-binding proteins (PstB), two transmembrane proteins (PstC and PstA) and a solute-binding protein (PstS).

The protein resides in the cell inner membrane. It carries out the reaction phosphate(out) + ATP + H2O = ADP + 2 phosphate(in) + H(+). Its function is as follows. Part of the ABC transporter complex PstSACB involved in phosphate import. Responsible for energy coupling to the transport system. This is Phosphate import ATP-binding protein PstB from Gluconobacter oxydans (strain 621H) (Gluconobacter suboxydans).